The chain runs to 360 residues: Lipid-A-disaccharide synthase (360 aa).

Belongs to the LpxB family.

The enzyme catalyses a lipid X + a UDP-2-N,3-O-bis[(3R)-3-hydroxyacyl]-alpha-D-glucosamine = a lipid A disaccharide + UDP + H(+). The protein operates within bacterial outer membrane biogenesis; LPS lipid A biosynthesis. In terms of biological role, condensation of UDP-2,3-diacylglucosamine and 2,3-diacylglucosamine-1-phosphate to form lipid A disaccharide, a precursor of lipid A, a phosphorylated glycolipid that anchors the lipopolysaccharide to the outer membrane of the cell. The sequence is that of Lipid-A-disaccharide synthase from Helicobacter acinonychis (strain Sheeba).